The following is a 261-amino-acid chain: Pyridoxine-5'-phosphate oxidase (261 aa).

Pyridoxal 5'-phosphate is bound at residue 42-45; the sequence is RGDR. 95 to 98 is an FMN binding site; it reads RMLL. Lysine 100 is a pyridoxal 5'-phosphate binding site. FMN is bound by residues 110–111, 116–117, and glutamine 139; these read FT and RK. Positions 157, 161, and 165 each coordinate pyridoxal 5'-phosphate. Residues 174–175 and tryptophan 219 contribute to the FMN site; that span reads QS. 225-227 contacts pyridoxal 5'-phosphate; it reads RLH. Arginine 229 contacts FMN. Threonine 238 carries the post-translational modification Phosphothreonine. Residue serine 241 is modified to Phosphoserine.

It belongs to the pyridoxamine 5'-phosphate oxidase family. As to quaternary structure, homodimer. Requires FMN as cofactor. Detected in adult liver.

The catalysed reaction is pyridoxamine 5'-phosphate + O2 + H2O = pyridoxal 5'-phosphate + H2O2 + NH4(+). It carries out the reaction pyridoxine 5'-phosphate + O2 = pyridoxal 5'-phosphate + H2O2. It functions in the pathway cofactor metabolism; pyridoxal 5'-phosphate salvage; pyridoxal 5'-phosphate from pyridoxamine 5'-phosphate: step 1/1. It participates in cofactor metabolism; pyridoxal 5'-phosphate salvage; pyridoxal 5'-phosphate from pyridoxine 5'-phosphate: step 1/1. Functionally, catalyzes the oxidation of either pyridoxine 5'-phosphate (PNP) or pyridoxamine 5'-phosphate (PMP) into pyridoxal 5'-phosphate (PLP). This Rattus norvegicus (Rat) protein is Pyridoxine-5'-phosphate oxidase (Pnpo).